Reading from the N-terminus, the 523-residue chain is Volkensin (523 aa).

Catalysis depends on residues Y74, Y113, E162, and R165. 111–113 (GGY) is a binding site for AMP. 2 disulfide bridges follow: C245-C269 and C285-C304. The propeptide at 251 to 265 (QSDSPLVIRSFVDRN) is linker peptide. Residues 270-397 (PSGETTAFIV…YAASQAWRVT (128 aa)) form the Ricin B-type lectin 1 domain. A carbohydrate-binding positions include 287-291 (DVKVE), Q300, K305, and N311. C328 and C343 are disulfide-bonded. The a carbohydrate site is built by N358 and N398. N-linked (GlcNAc...) asparagine glycosylation is found at N358 and N398. The region spanning 400–523 (TVPTVTTIVG…HGNSNQQWFL (124 aa)) is the Ricin B-type lectin 2 domain. Cystine bridges form between C414–C427 and C453–C471.

It in the N-terminal section; belongs to the ribosome-inactivating protein family. Type 2 RIP subfamily. Disulfide-linked dimer of A and B chains. In terms of processing, N-glycosylated. Contains mannose and galactose. As to expression, expressed in roots (at protein level). Expressed in seeds (at protein level).

It carries out the reaction Endohydrolysis of the N-glycosidic bond at one specific adenosine on the 28S rRNA.. Its activity is regulated as follows. Hemagglutinating activity is inhibited by galactose and structurally related sugars. Has N-glycosidase activity and is responsible for inhibiting protein synthesis through the catalytic inactivation of 60S ribosomal subunits by removing a specific adenine of 28S rRNA. Inhibits GTP-dependent binding of EF2 (elongation factor 2) to ribosomes. Its function is as follows. Binds to cell receptors and probably facilitates the entry into the cell of the A chain. Also acts as a galactose-specific lectin responsible for cell agglutination. In Adenia volkensii (Kilyambiti plant), this protein is Volkensin.